Reading from the N-terminus, the 336-residue chain is DNA-directed RNA polymerase subunit alpha (336 aa).

The interval 1 to 226 (MLIAQRPTLS…ELFGLARELN (226 aa)) is alpha N-terminal domain (alpha-NTD). Positions 243–336 (LAADMALPIE…SDDAFGDDEL (94 aa)) are alpha C-terminal domain (alpha-CTD).

It belongs to the RNA polymerase alpha chain family. Homodimer. The RNAP catalytic core consists of 2 alpha, 1 beta, 1 beta' and 1 omega subunit. When a sigma factor is associated with the core the holoenzyme is formed, which can initiate transcription.

The enzyme catalyses RNA(n) + a ribonucleoside 5'-triphosphate = RNA(n+1) + diphosphate. In terms of biological role, DNA-dependent RNA polymerase catalyzes the transcription of DNA into RNA using the four ribonucleoside triphosphates as substrates. The protein is DNA-directed RNA polymerase subunit alpha of Renibacterium salmoninarum (strain ATCC 33209 / DSM 20767 / JCM 11484 / NBRC 15589 / NCIMB 2235).